A 145-amino-acid polypeptide reads, in one-letter code: SsrA-binding protein (145 aa).

Belongs to the SmpB family.

It is found in the cytoplasm. Required for rescue of stalled ribosomes mediated by trans-translation. Binds to transfer-messenger RNA (tmRNA), required for stable association of tmRNA with ribosomes. tmRNA and SmpB together mimic tRNA shape, replacing the anticodon stem-loop with SmpB. tmRNA is encoded by the ssrA gene; the 2 termini fold to resemble tRNA(Ala) and it encodes a 'tag peptide', a short internal open reading frame. During trans-translation Ala-aminoacylated tmRNA acts like a tRNA, entering the A-site of stalled ribosomes, displacing the stalled mRNA. The ribosome then switches to translate the ORF on the tmRNA; the nascent peptide is terminated with the 'tag peptide' encoded by the tmRNA and targeted for degradation. The ribosome is freed to recommence translation, which seems to be the essential function of trans-translation. In Mesomycoplasma hyopneumoniae (strain 232) (Mycoplasma hyopneumoniae), this protein is SsrA-binding protein.